A 299-amino-acid chain; its full sequence is tRNA uridine(34) hydroxylase (299 aa).

The Rhodanese domain occupies 132-226 (AGRPVVMLDT…YFEEVGGAHY (95 aa)). C186 (cysteine persulfide intermediate) is an active-site residue.

Belongs to the TrhO family.

It catalyses the reaction uridine(34) in tRNA + AH2 + O2 = 5-hydroxyuridine(34) in tRNA + A + H2O. In terms of biological role, catalyzes oxygen-dependent 5-hydroxyuridine (ho5U) modification at position 34 in tRNAs. The sequence is that of tRNA uridine(34) hydroxylase from Burkholderia pseudomallei (strain 1106a).